Consider the following 499-residue polypeptide: Rhamnogalacturonate lyase A (499 aa).

The signal sequence occupies residues 1-20 (MLSKTSLLSLLSLAAGVVNA). 2 cysteine pairs are disulfide-bonded: cysteine 49-cysteine 92 and cysteine 183-cysteine 192.

The protein belongs to the polysaccharide lyase 4 family.

The protein resides in the secreted. The catalysed reaction is Endotype eliminative cleavage of L-alpha-rhamnopyranosyl-(1-&gt;4)-alpha-D-galactopyranosyluronic acid bonds of rhamnogalacturonan I domains in ramified hairy regions of pectin leaving L-rhamnopyranose at the reducing end and 4-deoxy-4,5-unsaturated D-galactopyranosyluronic acid at the non-reducing end.. Its function is as follows. Pectinolytic enzymes consist of four classes of enzymes: pectin lyase, polygalacturonase, pectin methylesterase and rhamnogalacturonase. Degrades the rhamnogalacturonan I (RG-I) backbone of pectin. This Aspergillus niger protein is Rhamnogalacturonate lyase A (rglA).